The following is a 334-amino-acid chain: MATIKDVARMAGVSTTTVSHVINKTRFVAEATQKKVLAAVDDLNYAPSAVARSLKCNTTKTIGMLVTKSTNPFFAEVIHGVEEYCYNAGYTLILCNTEGNLVKQRDYLRMLAEKRVDGLLVMCSDIDQDLLDLLARKSDLPMVIMDWGPESPLTDKIQDNAEQGGYVATKHFIDNGHEKIGCLSGHSEKSTCRERLKGFNKAMAEAGITVNNNWIIDGDFECESAVEAANQYIAMKDRPTAIFCFNDIMAMALISTFEQAGVRVPDDISVIGYDNIDLAPYFSPPLTTIHQPKRRLGKTAIEILMERVKDKNHERRVFEMNPELVIRKSVKDLN.

The HTH lacI-type domain maps to 2-56; sequence ATIKDVARMAGVSTTTVSHVINKTRFVAEATQKKVLAAVDDLNYAPSAVARSLKC. Positions 4 to 23 form a DNA-binding region, H-T-H motif; the sequence is IKDVARMAGVSTTTVSHVIN. The DNA-binding element occupies 48–56; that stretch reads SAVARSLKC. Hypoxanthine contacts are provided by Phe-73, Lys-189, Thr-191, Phe-220, and Asp-274.

As to quaternary structure, homodimer.

It functions in the pathway purine metabolism; purine nucleotide biosynthesis [regulation]. Is the main repressor of the genes involved in the de novo synthesis of purine nucleotides, regulating purB, purC, purEK, purF, purHD, purL, purMN and guaBA expression. PurR is allosterically activated to bind its cognate DNA by binding the purine corepressors, hypoxanthine or guanine, thereby effecting transcription repression. This is HTH-type transcriptional repressor PurR from Photobacterium profundum (strain SS9).